The primary structure comprises 436 residues: Glutamyl-tRNA reductase (436 aa).

Residues 49–52 (TCNR), Ser109, 114–116 (EGQ), and Gln120 contribute to the substrate site. The active-site Nucleophile is the Cys50. 198–203 (GAGRMS) provides a ligand contact to NADP(+).

The protein belongs to the glutamyl-tRNA reductase family. Homodimer.

It carries out the reaction (S)-4-amino-5-oxopentanoate + tRNA(Glu) + NADP(+) = L-glutamyl-tRNA(Glu) + NADPH + H(+). The protein operates within porphyrin-containing compound metabolism; protoporphyrin-IX biosynthesis; 5-aminolevulinate from L-glutamyl-tRNA(Glu): step 1/2. It participates in porphyrin-containing compound metabolism; chlorophyll biosynthesis. Its function is as follows. Catalyzes the NADPH-dependent reduction of glutamyl-tRNA(Glu) to glutamate 1-semialdehyde (GSA). This Prochlorococcus marinus (strain MIT 9301) protein is Glutamyl-tRNA reductase.